Reading from the N-terminus, the 256-residue chain is DNA polymerase sliding clamp 2 (256 aa).

The protein belongs to the PCNA family. In terms of assembly, homotrimer. The subunits circularize to form a toroid; DNA passes through its center. Replication factor C (RFC) is required to load the toroid on the DNA.

Its function is as follows. Sliding clamp subunit that acts as a moving platform for DNA processing. Responsible for tethering the catalytic subunit of DNA polymerase and other proteins to DNA during high-speed replication. The sequence is that of DNA polymerase sliding clamp 2 from Pyrobaculum aerophilum (strain ATCC 51768 / DSM 7523 / JCM 9630 / CIP 104966 / NBRC 100827 / IM2).